We begin with the raw amino-acid sequence, 150 residues long: Ribonuclease P protein subunit p21 (150 aa).

An N-acetylalanine modification is found at alanine 2. Residues cysteine 62, cysteine 65, cysteine 92, and cysteine 95 each coordinate Zn(2+). The segment at 121–150 (QADINPSEPLPNIADLPKENIQTQALNTSE) is disordered. The segment covering 140–150 (NIQTQALNTSE) has biased composition (polar residues).

This sequence belongs to the eukaryotic/archaeal RNase P protein component 4 family. In terms of assembly, RNase P consists of a catalytic RNA moiety and about 10 protein subunits; POP1, POP4, POP5, POP7, RPP14, RPP21, RPP25, RPP30, RPP38 and RPP40. Within the RNase P complex, POP1, POP7 and RPP25 form the 'finger' subcomplex, POP5, RPP14, RPP40 and homodimeric RPP30 form the 'palm' subcomplex, and RPP21, POP4 and RPP38 form the 'wrist' subcomplex. All subunits of the RNase P complex interact with the catalytic RNA.

Its subcellular location is the nucleus. The protein resides in the nucleolus. Functionally, component of ribonuclease P, a ribonucleoprotein complex that generates mature tRNA molecules by cleaving their 5'-ends. This is Ribonuclease P protein subunit p21 (Rpp21) from Mus musculus (Mouse).